The following is a 217-amino-acid chain: MTKIKICGITNPDDAIASCTAGADALGFNFSKASPRYIQPETALSIIEKLPPFISCVGVFVEQEPHEVNQICNLCRLDHAQLHAERYTAEKAVAVRGAKVIRVFRTGPDFTIDVVRTFAEETGITSFLFDAYRPGQPGGTGHVIEQQLAQKIFRETEHIGFGILAGGLKPENVAEATSTVRPYAVDTASGVEESPGRKNHQKIRDFVSAVHRSAELL.

This sequence belongs to the TrpF family.

It carries out the reaction N-(5-phospho-beta-D-ribosyl)anthranilate = 1-(2-carboxyphenylamino)-1-deoxy-D-ribulose 5-phosphate. It functions in the pathway amino-acid biosynthesis; L-tryptophan biosynthesis; L-tryptophan from chorismate: step 3/5. The polypeptide is N-(5'-phosphoribosyl)anthranilate isomerase (Chlorobium phaeobacteroides (strain BS1)).